Consider the following 119-residue polypeptide: Large ribosomal subunit protein uL22c (119 aa).

Belongs to the universal ribosomal protein uL22 family. As to quaternary structure, part of the 50S ribosomal subunit.

The protein localises to the plastid. Its subcellular location is the chloroplast. Functionally, this protein binds specifically to 23S rRNA. The globular domain of the protein is located near the polypeptide exit tunnel on the outside of the subunit, while an extended beta-hairpin is found that lines the wall of the exit tunnel in the center of the 70S ribosome. This is Large ribosomal subunit protein uL22c (rpl22) from Anthoceros angustus (Hornwort).